The chain runs to 384 residues: WAT1-related protein At4g08290 (384 aa).

10 consecutive transmembrane segments (helical) span residues 15 to 35 (LLMI…MATL), 43 to 63 (VVIV…ALIF), 73 to 93 (LSVL…DQGF), 104 to 124 (TYTS…AWIL), 140 to 160 (IIGT…KGPL), 186 to 206 (WVVG…FYVL), 219 to 239 (SLSA…ALVV), 255 to 275 (FAPL…QGMV), 282 to 302 (VFVT…ASFI), and 307 to 327 (IHFG…MVVW). EamA domains are found at residues 25–154 (AGTY…LVMT) and 198–326 (VAWS…YMVV).

The protein belongs to the drug/metabolite transporter (DMT) superfamily. Plant drug/metabolite exporter (P-DME) (TC 2.A.7.4) family.

The protein localises to the membrane. The sequence is that of WAT1-related protein At4g08290 from Arabidopsis thaliana (Mouse-ear cress).